Reading from the N-terminus, the 120-residue chain is Phosphoribosyl-ATP pyrophosphatase (120 aa).

The disordered stretch occupies residues 97 to 120; it reads REGTSGLVEKASRPAKKDSGTADS. A compositionally biased stretch (basic and acidic residues) spans 106-120; it reads KASRPAKKDSGTADS.

The protein belongs to the PRA-PH family.

The protein resides in the cytoplasm. It carries out the reaction 1-(5-phospho-beta-D-ribosyl)-ATP + H2O = 1-(5-phospho-beta-D-ribosyl)-5'-AMP + diphosphate + H(+). It functions in the pathway amino-acid biosynthesis; L-histidine biosynthesis; L-histidine from 5-phospho-alpha-D-ribose 1-diphosphate: step 2/9. This is Phosphoribosyl-ATP pyrophosphatase from Rhodopirellula baltica (strain DSM 10527 / NCIMB 13988 / SH1).